A 307-amino-acid chain; its full sequence is Small ribosomal subunit biogenesis GTPase RsgA (307 aa).

The tract at residues 1-20 (MPSEHPFSDGISTPNPKETM) is disordered. A compositionally biased stretch (polar residues) spans 10-20 (GISTPNPKETM). The 158-residue stretch at 85–242 (RQDAWKTKLI…LIDSPGLQEF (158 aa)) folds into the CP-type G domain. GTP contacts are provided by residues 135–138 (NKAD) and 184–192 (GQSGMGKST). Positions 266, 271, 273, and 279 each coordinate Zn(2+).

It belongs to the TRAFAC class YlqF/YawG GTPase family. RsgA subfamily. In terms of assembly, monomer. Associates with 30S ribosomal subunit, binds 16S rRNA. The cofactor is Zn(2+).

It is found in the cytoplasm. One of several proteins that assist in the late maturation steps of the functional core of the 30S ribosomal subunit. Helps release RbfA from mature subunits. May play a role in the assembly of ribosomal proteins into the subunit. Circularly permuted GTPase that catalyzes slow GTP hydrolysis, GTPase activity is stimulated by the 30S ribosomal subunit. The chain is Small ribosomal subunit biogenesis GTPase RsgA from Neisseria meningitidis serogroup A / serotype 4A (strain DSM 15465 / Z2491).